We begin with the raw amino-acid sequence, 61 residues long: Small ribosomal subunit protein uS14B (61 aa).

Zn(2+) contacts are provided by Cys-24, Cys-27, Cys-40, and Cys-43.

This sequence belongs to the universal ribosomal protein uS14 family. Zinc-binding uS14 subfamily. As to quaternary structure, part of the 30S ribosomal subunit. Contacts proteins S3 and S10. It depends on Zn(2+) as a cofactor.

Its function is as follows. Binds 16S rRNA, required for the assembly of 30S particles and may also be responsible for determining the conformation of the 16S rRNA at the A site. This chain is Small ribosomal subunit protein uS14B, found in Bacillus velezensis (strain DSM 23117 / BGSC 10A6 / LMG 26770 / FZB42) (Bacillus amyloliquefaciens subsp. plantarum).